Consider the following 716-residue polypeptide: Protein C-mannosyl-transferase DPY19L3 (716 aa).

Topologically, residues 1–43 are cytoplasmic; sequence MMSIRQRREIRATEVSEDFPAQEENVKLENKLPSGCTSRRLWK. Residues 44-64 form a helical membrane-spanning segment; it reads ILSLTIGGTIALCIGLLTSVY. At 65-154 the chain is on the lumenal side; that stretch reads LATLHENDLW…RVLPVQKYLE (90 aa). Asn-118 is a glycosylation site (N-linked (GlcNAc...) asparagine). A helical membrane pass occupies residues 155–182; it reads PVYFYIYTLFGLQAIYVTALYITSWLLS. Residues 183–184 lie on the Cytoplasmic side of the membrane; that stretch reads GT. Positions 185-197 form an intramembrane region, name=3; it reads WLSGLLAAFWYVT. At 198–215 the chain is on the cytoplasmic side; sequence NRIDTTRVEFTIPLRENW. The name=4 intramembrane region spans 216–230; the sequence is ALPFFAIQIAAITYF. Over 231 to 239 the chain is Cytoplasmic; the sequence is LRPNLQPLS. A helical transmembrane segment spans residues 240–256; sequence ERLTLLAIFISTFLFSL. Residues 257-262 are Lumenal-facing; sequence TWQFNQ. Residues 263 to 279 form a helical membrane-spanning segment; the sequence is FMMLMQALVLFTLDSLD. Over 280–289 the chain is Cytoplasmic; the sequence is MLPAVKATWL. Residues 290-306 form a helical membrane-spanning segment; the sequence is YGIQITSLLLVCILQFF. Topologically, residues 307–308 are lumenal; the sequence is NS. A helical membrane pass occupies residues 309–323; sequence MILGSLLISFNLSVF. Residues 324 to 338 are Cytoplasmic-facing; the sequence is IARKLQKNLKTGSFL. A helical transmembrane segment spans residues 339–359; it reads NRLGKLLLHLFMVLCLTLFLN. Residues 360–414 are Lumenal-facing; that stretch reads NIIKKILNLKSDEHIFKFLKAKFGLGATRDFDANLYLCEEAFGLLPFNTFGRLSD. Residues 415 to 437 traverse the membrane as a helical segment; that stretch reads TLLFYAYIFVLSITVIVAFVVAF. Residues 438–465 are Cytoplasmic-facing; that stretch reads HNLSDSTNQQSVGKMEKGTVDLKPETAY. A helical membrane pass occupies residues 466-485; the sequence is NLIHTILFGFLALSTMRMKY. At 486-487 the chain is on the lumenal side; that stretch reads LW. The helical transmembrane segment at 488–499 threads the bilayer; it reads TSHMCVFASFGL. The Cytoplasmic segment spans residues 500–522; the sequence is CSPEIWELLLKSVHLYNPKRICI. The helical transmembrane segment at 523 to 539 threads the bilayer; it reads MRYSVPILILLYLCYKF. Residues 540 to 716 lie on the Lumenal side of the membrane; that stretch reads WPGMMDELSE…FHVYKLSRNK (177 aa). A glycan (N-linked (GlcNAc...) asparagine) is linked at Asn-704.

The protein belongs to the dpy-19 family.

Its subcellular location is the endoplasmic reticulum membrane. The enzyme catalyses L-tryptophyl-[protein] + a di-trans,poly-cis-dolichyl beta-D-mannosyl phosphate = C-alpha-D-mannosyl-L-tryptophyl-[protein] + a di-trans,poly-cis-dolichyl phosphate + H(+). Its pathway is protein modification; protein glycosylation. C-mannosyltransferase that mediates C-mannosylation of tryptophan residues on target proteins. The reaction occurs on the luminal side of the endoplasmic reticulum and involves the transfer of a mannose unit from a dolichylphosphate mannose (Dol-P-Man) donor to an acceptor protein containing a WxxW or WxxC consensus sequence. C-mannosylates RSPO1, a Wnt signaling regulator, preferentially at the first Trp residue in the sequence WxxW. C-mannosylates the netrin receptor UNC5A, preferentially at the third tryptophan of WxxWxxWxxC sequence. This Pongo abelii (Sumatran orangutan) protein is Protein C-mannosyl-transferase DPY19L3 (DPY19L3).